We begin with the raw amino-acid sequence, 76 residues long: Large ribosomal subunit protein bL31 (76 aa).

This sequence belongs to the bacterial ribosomal protein bL31 family. Type A subfamily. Part of the 50S ribosomal subunit.

In terms of biological role, binds the 23S rRNA. This Gluconacetobacter diazotrophicus (strain ATCC 49037 / DSM 5601 / CCUG 37298 / CIP 103539 / LMG 7603 / PAl5) protein is Large ribosomal subunit protein bL31.